A 426-amino-acid polypeptide reads, in one-letter code: Glutamate-1-semialdehyde 2,1-aminomutase (426 aa).

Lysine 265 carries the N6-(pyridoxal phosphate)lysine modification.

This sequence belongs to the class-III pyridoxal-phosphate-dependent aminotransferase family. HemL subfamily. In terms of assembly, homodimer. Requires pyridoxal 5'-phosphate as cofactor.

The protein localises to the cytoplasm. It catalyses the reaction (S)-4-amino-5-oxopentanoate = 5-aminolevulinate. Its pathway is porphyrin-containing compound metabolism; protoporphyrin-IX biosynthesis; 5-aminolevulinate from L-glutamyl-tRNA(Glu): step 2/2. This Alteromonas mediterranea (strain DSM 17117 / CIP 110805 / LMG 28347 / Deep ecotype) protein is Glutamate-1-semialdehyde 2,1-aminomutase.